Here is a 294-residue protein sequence, read N- to C-terminus: ATP phosphoribosyltransferase (294 aa).

This sequence belongs to the ATP phosphoribosyltransferase family. Long subfamily. Mg(2+) is required as a cofactor.

It localises to the cytoplasm. The enzyme catalyses 1-(5-phospho-beta-D-ribosyl)-ATP + diphosphate = 5-phospho-alpha-D-ribose 1-diphosphate + ATP. The protein operates within amino-acid biosynthesis; L-histidine biosynthesis; L-histidine from 5-phospho-alpha-D-ribose 1-diphosphate: step 1/9. With respect to regulation, feedback inhibited by histidine. Catalyzes the condensation of ATP and 5-phosphoribose 1-diphosphate to form N'-(5'-phosphoribosyl)-ATP (PR-ATP). Has a crucial role in the pathway because the rate of histidine biosynthesis seems to be controlled primarily by regulation of HisG enzymatic activity. The polypeptide is ATP phosphoribosyltransferase (Chlorobaculum parvum (strain DSM 263 / NCIMB 8327) (Chlorobium vibrioforme subsp. thiosulfatophilum)).